Reading from the N-terminus, the 349-residue chain is tRNA pseudouridine synthase D (349 aa).

Phenylalanine 27 serves as a coordination point for substrate. The active-site Nucleophile is aspartate 80. Asparagine 129 lines the substrate pocket. One can recognise a TRUD domain in the interval 155-303 (GVPNYFGAQR…VEAARRAMLL (149 aa)). Phenylalanine 329 contacts substrate.

Belongs to the pseudouridine synthase TruD family.

It catalyses the reaction uridine(13) in tRNA = pseudouridine(13) in tRNA. Its function is as follows. Responsible for synthesis of pseudouridine from uracil-13 in transfer RNAs. The sequence is that of tRNA pseudouridine synthase D from Escherichia coli O45:K1 (strain S88 / ExPEC).